The primary structure comprises 123 residues: Protein Rev (123 aa).

Phosphoserine; by host CK2 occurs at positions 5 and 8. Residues 18–26 (IIKILYQSN) are homomultimerization. Disordered stretches follow at residues 24 to 49 (QSNP…RARQ) and 82 to 123 (TLDS…GAKN). Positions 34–50 (SRQARRNRRRRWRARQR) match the Nuclear localization signal and RNA-binding (RRE) motif. Residues 36 to 49 (QARRNRRRRWRARQ) show a composition bias toward basic residues. A Nuclear export signal and binding to XPO1 motif is present at residues 73-84 (LPLPPIERLTLD). The span at 97-112 (PQGTETGTGSPNTPEG) shows a compositional bias: polar residues.

It belongs to the HIV-1 REV protein family. Homomultimer; when bound to the RRE. Multimeric assembly is essential for activity and may involve XPO1. Binds to human KPNB1, XPO1, TNPO1, RANBP5 and IPO7. Interacts with the viral Integrase. Interacts with human KHDRBS1. Interacts with human NAP1; this interaction decreases Rev multimerization and stimulates its activity. Interacts with human DEAD-box helicases DDX3 and DDX24; these interactions may serve for viral RNA export to the cytoplasm and packaging, respectively. Interacts with human PSIP1; this interaction may inhibit HIV-1 DNA integration by promoting dissociation of the Integrase-LEDGF/p75 complex. Asymmetrically arginine dimethylated at one site by host PRMT6. Methylation impairs the RNA-binding activity and export of viral RNA from the nucleus to the cytoplasm. In terms of processing, phosphorylated by protein kinase CK2. Presence of, and maybe binding to the N-terminus of the regulatory beta subunit of CK2 is necessary for CK2-mediated Rev's phosphorylation.

The protein localises to the host nucleus. It is found in the host nucleolus. Its subcellular location is the host cytoplasm. In terms of biological role, escorts unspliced or incompletely spliced viral pre-mRNAs (late transcripts) out of the nucleus of infected cells. These pre-mRNAs carry a recognition sequence called Rev responsive element (RRE) located in the env gene, that is not present in fully spliced viral mRNAs (early transcripts). This function is essential since most viral proteins are translated from unspliced or partially spliced pre-mRNAs which cannot exit the nucleus by the pathway used by fully processed cellular mRNAs. Rev itself is translated from a fully spliced mRNA that readily exits the nucleus. Rev's nuclear localization signal (NLS) binds directly to KPNB1/Importin beta-1 without previous binding to KPNA1/Importin alpha-1. KPNB1 binds to the GDP bound form of RAN (Ran-GDP) and targets Rev to the nucleus. In the nucleus, the conversion from Ran-GDP to Ran-GTP dissociates Rev from KPNB1 and allows Rev's binding to the RRE in viral pre-mRNAs. Rev multimerization on the RRE via cooperative assembly exposes its nuclear export signal (NES) to the surface. Rev can then form a complex with XPO1/CRM1 and Ran-GTP, leading to nuclear export of the complex. Conversion from Ran-GTP to Ran-GDP mediates dissociation of the Rev/RRE/XPO1/RAN complex, so that Rev can return to the nucleus for a subsequent round of export. Beside KPNB1, also seems to interact with TNPO1/Transportin-1, RANBP5/IPO5 and IPO7/RANBP7 for nuclear import. The nucleoporin-like HRB/RIP is an essential cofactor that probably indirectly interacts with Rev to release HIV RNAs from the perinuclear region to the cytoplasm. This chain is Protein Rev, found in Simian immunodeficiency virus (isolate MB66) (SIV-cpz).